The primary structure comprises 515 residues: Maturase K (515 aa).

This sequence belongs to the intron maturase 2 family. MatK subfamily.

Its subcellular location is the plastid. It localises to the chloroplast. Functionally, usually encoded in the trnK tRNA gene intron. Probably assists in splicing its own and other chloroplast group II introns. This chain is Maturase K, found in Zingiber mioga (Myoga ginger).